A 348-amino-acid chain; its full sequence is Phenylalanine--tRNA ligase alpha subunit (348 aa).

E259 serves as a coordination point for Mg(2+).

It belongs to the class-II aminoacyl-tRNA synthetase family. Phe-tRNA synthetase alpha subunit type 1 subfamily. As to quaternary structure, tetramer of two alpha and two beta subunits. Mg(2+) is required as a cofactor.

Its subcellular location is the cytoplasm. It catalyses the reaction tRNA(Phe) + L-phenylalanine + ATP = L-phenylalanyl-tRNA(Phe) + AMP + diphosphate + H(+). In Lacticaseibacillus casei (strain BL23) (Lactobacillus casei), this protein is Phenylalanine--tRNA ligase alpha subunit.